Consider the following 440-residue polypeptide: Argininosuccinate lyase (440 aa).

Belongs to the lyase 1 family. Argininosuccinate lyase subfamily.

The protein resides in the cytoplasm. The enzyme catalyses 2-(N(omega)-L-arginino)succinate = fumarate + L-arginine. The protein operates within amino-acid biosynthesis; L-arginine biosynthesis; L-arginine from L-ornithine and carbamoyl phosphate: step 3/3. The chain is Argininosuccinate lyase from Clostridium botulinum (strain Loch Maree / Type A3).